The primary structure comprises 500 residues: Ephrin type-B receptor 3 (500 aa).

Residues 1–64 (PLLVLDLIIQ…NPVDFSTSLY (64 aa)) form the Fibronectin type-III domain. At 1-113 (PLLVLDLIIQ…ERSVQDLLPL (113 aa)) the chain is on the extracellular side. Residues 76 to 103 (HLRRREELTTTTTGLKSREERFQKSDDP) form a disordered region. Basic and acidic residues predominate over residues 91 to 103 (KSREERFQKSDDP). Residues 114 to 134 (IVGSASAGFVVILAMIVIAVV) traverse the membrane as a helical segment. At 135 to 500 (CLRRQRTGSE…QMSQTLPIRV (366 aa)) the chain is on the cytoplasmic side. Phosphotyrosine; by autocatalysis is present on Y168. The Protein kinase domain occupies 187–450 (VKIEEVIGAG…QIVSTLDKFL (264 aa)). ATP is bound by residues 193–201 (IGAGEFGEV) and K219. The active-site Proton acceptor is the D312. Residues 421–500 (LHQLMLECWV…QMSQTLPIRV (80 aa)) form the SAM domain. Positions 498–500 (IRV) match the PDZ-binding motif.

The protein belongs to the protein kinase superfamily. Tyr protein kinase family. Ephrin receptor subfamily. In terms of assembly, heterotetramer upon binding of the ligand. The heterotetramer is composed of an ephrin dimer and a receptor dimer. Oligomerization is probably required to induce biological responses. In terms of processing, phosphorylated. Autophosphorylates upon ligand-binding. Autophosphorylation on Tyr-168 is required for interaction with SH2 domain-containing proteins. In terms of tissue distribution, widely expressed in the developing nervous system.

It localises to the cell membrane. The protein resides in the cell projection. The protein localises to the dendrite. It catalyses the reaction L-tyrosyl-[protein] + ATP = O-phospho-L-tyrosyl-[protein] + ADP + H(+). Its function is as follows. Receptor tyrosine kinase which binds promiscuously transmembrane ephrin-B family ligands residing on adjacent cells, leading to contact-dependent bidirectional signaling into neighboring cells. The signaling pathway downstream of the receptor is referred to as forward signaling while the signaling pathway downstream of the ephrin ligand is referred to as reverse signaling. Generally has an overlapping and redundant function with EPHB2. Like EPHB2, functions in axon guidance during development. In addition to its role in axon guidance also plays an important redundant role with other ephrin-B receptors in development and maturation of dendritic spines and the formation of excitatory synapses. May control other aspects of development through regulation of cell migration and positioning. May play a role in early pattern formation within the developing nervous system. The chain is Ephrin type-B receptor 3 (ephb3) from Danio rerio (Zebrafish).